The chain runs to 649 residues: tRNA-guanine(15) transglycosylase (649 aa).

Aspartate 88 functions as the Nucleophile in the catalytic mechanism. Substrate-binding residues include aspartate 123 and alanine 194. Residues cysteine 280, cysteine 282, and cysteine 285 each contribute to the Zn(2+) site. Positions 573–648 constitute a PUA domain; sequence KYRIVIDSSV…VAATLRGGLK (76 aa).

It belongs to the archaeosine tRNA-ribosyltransferase family. Zn(2+) is required as a cofactor.

It catalyses the reaction guanosine(15) in tRNA + 7-cyano-7-deazaguanine = 7-cyano-7-carbaguanosine(15) in tRNA + guanine. It functions in the pathway tRNA modification; archaeosine-tRNA biosynthesis. Its function is as follows. Exchanges the guanine residue with 7-cyano-7-deazaguanine (preQ0) at position 15 in the dihydrouridine loop (D-loop) of archaeal tRNAs. The polypeptide is tRNA-guanine(15) transglycosylase (Methanococcus maripaludis (strain C6 / ATCC BAA-1332)).